A 56-amino-acid chain; its full sequence is Defensin-1 (56 aa).

The N-terminal stretch at Met-1–Gly-24 is a signal peptide. Intrachain disulfides connect Cys-26/Cys-45, Cys-31/Cys-53, and Cys-35/Cys-55.

It localises to the secreted. Its function is as follows. Antibacterial protein involved in the immune response to septic injury. When combined with 14.026 kDa and 14.059 kDa hemolymph antimicrobial peptides, it has a strong cooperative activity against the Gram-positive bacteria B.subtilis and S.aureus, and against the Gram-negative bacteria E.coli DH5-alpha and K.pneumoniae ATCC 138833. Does not show detectable antibacterial activity when present alone. Has no hemolytic activity in human erythrocytes. The protein is Defensin-1 of Centruroides limpidus (Mexican scorpion).